The chain runs to 559 residues: Methionine--tRNA ligase (559 aa).

Positions 10-20 (PYINAVPHLGT) match the 'HIGH' region motif. Residues Cys141, Cys144, Cys154, and Cys157 each contribute to the Zn(2+) site. The short motif at 331–335 (KFSKS) is the 'KMSKS' region element. Lys334 is a binding site for ATP.

It belongs to the class-I aminoacyl-tRNA synthetase family. MetG type 1 subfamily. It depends on Zn(2+) as a cofactor.

Its subcellular location is the cytoplasm. It catalyses the reaction tRNA(Met) + L-methionine + ATP = L-methionyl-tRNA(Met) + AMP + diphosphate. Functionally, is required not only for elongation of protein synthesis but also for the initiation of all mRNA translation through initiator tRNA(fMet) aminoacylation. The protein is Methionine--tRNA ligase of Korarchaeum cryptofilum (strain OPF8).